We begin with the raw amino-acid sequence, 287 residues long: U-megalopygitoxin(8)-Mc8 (287 aa).

The signal sequence occupies residues 1–17 (MYLQYLVLSLFSTTVYG).

The protein belongs to the caterpillar 8 family. Post-translationally, contains 2 disulfide bonds. Expressed by the venom apparatus.

It is found in the secreted. Probable toxin. The sequence is that of U-megalopygitoxin(8)-Mc8 from Megalopyge crispata (Black-waved flannel moth).